Consider the following 326-residue polypeptide: Delta-aminolevulinic acid dehydratase (326 aa).

Zn(2+) contacts are provided by C125, C127, and C135. Catalysis depends on K200, which acts as the Schiff-base intermediate with substrate. 5-aminolevulinate contacts are provided by R210 and R222. E238 is a binding site for Mg(2+). The Schiff-base intermediate with substrate role is filled by K253. S279 is a 5-aminolevulinate binding site.

The protein belongs to the ALAD family. As to quaternary structure, homooctamer. The cofactor is Zn(2+).

The catalysed reaction is 2 5-aminolevulinate = porphobilinogen + 2 H2O + H(+). Its pathway is porphyrin-containing compound metabolism; protoporphyrin-IX biosynthesis; coproporphyrinogen-III from 5-aminolevulinate: step 1/4. Catalyzes an early step in the biosynthesis of tetrapyrroles. Binds two molecules of 5-aminolevulinate per subunit, each at a distinct site, and catalyzes their condensation to form porphobilinogen. The chain is Delta-aminolevulinic acid dehydratase (hemB) from Methanothermobacter thermautotrophicus (strain ATCC 29096 / DSM 1053 / JCM 10044 / NBRC 100330 / Delta H) (Methanobacterium thermoautotrophicum).